An 843-amino-acid polypeptide reads, in one-letter code: Neuroligin-1 (843 aa).

An N-terminal signal peptide occupies residues 1 to 45 (MALPRCMWPNYVWRAMMACVVHRGSGAPLTLCLLGCLLQTFHVLS). Residues 46 to 697 (QKLDDVDPLV…DQRDYSTELS (652 aa)) are Extracellular-facing. N-linked (GlcNAc...) (complex) asparagine glycosylation occurs at Asn109. 2 cysteine pairs are disulfide-bonded: Cys117–Cys153 and Cys172–Cys181. Residues Asn303 and Asn343 are each glycosylated (N-linked (GlcNAc...) (complex) asparagine). Disulfide bonds link Cys342-Cys353 and Cys512-Cys546. Asn547 carries an N-linked (GlcNAc...) asparagine glycan. Residues 647-688 (TKVPSTDITLRPTRKNSTPVTSAFPTAKQDDPKQQPSPFSVD) are disordered. Residues 661 to 670 (KNSTPVTSAF) are compositionally biased toward polar residues. Residues Ser683 and Ser686 are each glycosylated (O-linked (GalNAc...) serine). The helical transmembrane segment at 698–718 (VTIAVGASLLFLNILAFAALY) threads the bilayer. The Cytoplasmic portion of the chain corresponds to 719–843 (YKKDKRRHDV…HPHSHSTTRV (125 aa)). Positions 822 to 843 (GGQNNTLPHPHPHPHSHSTTRV) are disordered. Basic residues predominate over residues 831-843 (PHPHPHSHSTTRV).

This sequence belongs to the type-B carboxylesterase/lipase family. As to quaternary structure, interacts with neurexins NRXN1, NRXN2 and NRXN3. Interaction with neurexins is mediated by heparan sulfate glycan modification on neurexin. Interacts with NLGN3. Interacts (via its C-terminus) with DLG4/PSD-95 (via PDZ domain 3). Interacts with GOPC. Interacts with AIP1 and PDZRN3. The N-terminus is blocked. In terms of tissue distribution, expressed in brain, almost exclusively in neurons, and spinal cord. Detected in pancreas islet beta cells.

Its subcellular location is the cell membrane. The protein localises to the postsynaptic density. The protein resides in the synaptic cleft. It is found in the synaptic cell membrane. In terms of biological role, cell surface protein involved in cell-cell-interactions via its interactions with neurexin family members. Plays a role in synapse function and synaptic signal transmission, and probably mediates its effects by recruiting and clustering other synaptic proteins. May promote the initial formation of synapses, but is not essential for this. In vitro, triggers the de novo formation of presynaptic structures. May be involved in specification of excitatory synapses. Required to maintain wakefulness quality and normal synchrony of cerebral cortex activity during wakefulness and sleep. The protein is involved in nervous system development. The sequence is that of Neuroligin-1 (Nlgn1) from Rattus norvegicus (Rat).